The sequence spans 626 residues: tRNA uridine 5-carboxymethylaminomethyl modification enzyme MnmG (626 aa).

Position 13 to 18 (13 to 18 (GGGHAG)) interacts with FAD. 273 to 287 (GPRYCPSIEDKIHRF) lines the NAD(+) pocket.

Belongs to the MnmG family. In terms of assembly, homodimer. Heterotetramer of two MnmE and two MnmG subunits. Requires FAD as cofactor.

The protein resides in the cytoplasm. Functionally, NAD-binding protein involved in the addition of a carboxymethylaminomethyl (cmnm) group at the wobble position (U34) of certain tRNAs, forming tRNA-cmnm(5)s(2)U34. The polypeptide is tRNA uridine 5-carboxymethylaminomethyl modification enzyme MnmG (Acinetobacter baylyi (strain ATCC 33305 / BD413 / ADP1)).